We begin with the raw amino-acid sequence, 286 residues long: ATP synthase gamma chain (286 aa).

It belongs to the ATPase gamma chain family. In terms of assembly, F-type ATPases have 2 components, CF(1) - the catalytic core - and CF(0) - the membrane proton channel. CF(1) has five subunits: alpha(3), beta(3), gamma(1), delta(1), epsilon(1). CF(0) has three main subunits: a, b and c.

The protein resides in the cell inner membrane. Its function is as follows. Produces ATP from ADP in the presence of a proton gradient across the membrane. The gamma chain is believed to be important in regulating ATPase activity and the flow of protons through the CF(0) complex. The protein is ATP synthase gamma chain of Shewanella frigidimarina (strain NCIMB 400).